A 433-amino-acid polypeptide reads, in one-letter code: Protein translocase subunit SecD (433 aa).

The next 6 membrane-spanning stretches (helical) occupy residues 7 to 27, 257 to 277, 278 to 298, 300 to 320, 354 to 374, and 380 to 400; these read LAFLAMVVVVLGLTISTGPKI, LIAGVIAVVLIFAFMIAAYRM, AGLIADIALVAYGYLTLLTFA, LHVVLTLSGLAALILGVGIAV, TIVDSNATTFIAGLIMYIFGG, and GFAVALMVGIIVSLLTAVLFA.

Belongs to the SecD/SecF family. SecD subfamily. In terms of assembly, forms a complex with SecF. Part of the essential Sec protein translocation apparatus which comprises SecA, SecYEG and auxiliary proteins SecDF. Other proteins may also be involved.

It localises to the cell membrane. Part of the Sec protein translocase complex. Interacts with the SecYEG preprotein conducting channel. SecDF uses the proton motive force (PMF) to complete protein translocation after the ATP-dependent function of SecA. This is Protein translocase subunit SecD from Alicyclobacillus acidocaldarius subsp. acidocaldarius (strain ATCC 27009 / DSM 446 / BCRC 14685 / JCM 5260 / KCTC 1825 / NBRC 15652 / NCIMB 11725 / NRRL B-14509 / 104-IA) (Bacillus acidocaldarius).